Consider the following 61-residue polypeptide: Type IV secretion system protein PtlI homolog (61 aa).

An N-terminal signal peptide occupies residues 1–25; the sequence is MIHAHSNARLLRWAILAIAPVTLGA. The disordered stretch occupies residues 37–61; it reads PDGKPLIPINTAAPEQGSSCQTRAP. The segment covering 52 to 61 has biased composition (polar residues); sequence QGSSCQTRAP.

This Bordetella parapertussis (strain 12822 / ATCC BAA-587 / NCTC 13253) protein is Type IV secretion system protein PtlI homolog (ptlI).